The following is a 655-amino-acid chain: p-hydroxybenzoic acid efflux pump subunit AaeB (655 aa).

11 helical membrane passes run 13-33 (FAVK…HFQL), 38-58 (WAVL…GGEP), 69-89 (LRII…ITMI), 93-113 (LLMI…SSLV), 121-141 (WGLS…EPLL), 152-172 (EIVI…PRSV), 370-390 (LFWL…IAVV), 407-427 (FIYG…VIIP), 431-451 (QSML…GIEV), 459-479 (MGAL…TFHF), and 482-502 (FLDS…VILL).

It belongs to the aromatic acid exporter ArAE (TC 2.A.85) family.

It is found in the cell inner membrane. Forms an efflux pump with AaeA. Could function as a metabolic relief valve, allowing to eliminate certain compounds when they accumulate to high levels in the cell. This chain is p-hydroxybenzoic acid efflux pump subunit AaeB, found in Citrobacter koseri (strain ATCC BAA-895 / CDC 4225-83 / SGSC4696).